A 287-amino-acid polypeptide reads, in one-letter code: PAK4-inhibitor INKA1 (287 aa).

Disordered stretches follow at residues 22-59 and 138-157; these read GRDT…LEED and SRAP…KSTP. The span at 35-50 shows a compositional bias: polar residues; the sequence is QPTSQTGPDVQPSHQL. Positions 138 to 147 are enriched in low complexity; the sequence is SRAPVASVPP. Inka box regions lie at residues 168–205 and 261–287; these read EAED…ELPE and PADV…VSYL.

This sequence belongs to the INKA family. As to quaternary structure, interacts with PAK4.

The protein resides in the nucleus. The protein localises to the cytoplasm. Functionally, inhibitor of the serine/threonine-protein kinase PAK4. Acts by binding PAK4 in a substrate-like manner, inhibiting the protein kinase activity. The protein is PAK4-inhibitor INKA1 of Homo sapiens (Human).